A 525-amino-acid polypeptide reads, in one-letter code: GMP synthase [glutamine-hydrolyzing] (525 aa).

The Glutamine amidotransferase type-1 domain maps to 8 to 206 (PLLILDFGSQ…VVDICKASTD (199 aa)). Catalysis depends on Cys85, which acts as the Nucleophile. Active-site residues include His180 and Glu182. One can recognise a GMPS ATP-PPase domain in the interval 207–400 (WTPEHIIDEA…LGLPHDMVYR (194 aa)). 234–240 (SGGVDSS) provides a ligand contact to ATP.

As to quaternary structure, homodimer.

It catalyses the reaction XMP + L-glutamine + ATP + H2O = GMP + L-glutamate + AMP + diphosphate + 2 H(+). Its pathway is purine metabolism; GMP biosynthesis; GMP from XMP (L-Gln route): step 1/1. Its function is as follows. Catalyzes the synthesis of GMP from XMP. This is GMP synthase [glutamine-hydrolyzing] from Legionella pneumophila subsp. pneumophila (strain Philadelphia 1 / ATCC 33152 / DSM 7513).